Here is a 393-residue protein sequence, read N- to C-terminus: Glutamyl-tRNA reductase (393 aa).

Substrate is bound by residues Thr-47 to Arg-50, Ser-98, Glu-103 to Asp-105, and Gln-109. The active-site Nucleophile is Cys-48. Gly-177–Gly-182 lines the NADP(+) pocket.

This sequence belongs to the glutamyl-tRNA reductase family. In terms of assembly, homodimer.

The catalysed reaction is (S)-4-amino-5-oxopentanoate + tRNA(Glu) + NADP(+) = L-glutamyl-tRNA(Glu) + NADPH + H(+). The protein operates within porphyrin-containing compound metabolism; protoporphyrin-IX biosynthesis; 5-aminolevulinate from L-glutamyl-tRNA(Glu): step 1/2. Its function is as follows. Catalyzes the NADPH-dependent reduction of glutamyl-tRNA(Glu) to glutamate 1-semialdehyde (GSA). This is Glutamyl-tRNA reductase from Pyrobaculum islandicum (strain DSM 4184 / JCM 9189 / GEO3).